A 527-amino-acid chain; its full sequence is EGF domain-specific O-linked N-acetylglucosamine transferase (527 aa).

The signal sequence occupies residues 1–17; that stretch reads MFMLLVFGALLPEVPLS. Positions 295–297 match the Required for optimal activity motif; sequence DYD. N-linked (GlcNAc...) asparagine glycosylation occurs at asparagine 354. Positions 524–527 match the Prevents secretion from ER motif; the sequence is HDEL.

This sequence belongs to the glycosyltransferase 61 family.

The protein localises to the endoplasmic reticulum lumen. It carries out the reaction L-seryl-[protein] + UDP-N-acetyl-alpha-D-glucosamine = 3-O-(N-acetyl-beta-D-glucosaminyl)-L-seryl-[protein] + UDP + H(+). The catalysed reaction is L-threonyl-[protein] + UDP-N-acetyl-alpha-D-glucosamine = 3-O-(N-acetyl-beta-D-glucosaminyl)-L-threonyl-[protein] + UDP + H(+). Catalyzes the transfer of a single N-acetylglucosamine from UDP-GlcNAc to a serine or threonine residue in extracellular proteins resulting in their modification with a beta-linked N-acetylglucosamine (O-GlcNAc). Specifically glycosylates the Thr residue located between the fifth and sixth conserved cysteines of folded EGF-like domains. This Bos taurus (Bovine) protein is EGF domain-specific O-linked N-acetylglucosamine transferase (EOGT).